The chain runs to 429 residues: Formate-dependent phosphoribosylglycinamide formyltransferase (429 aa).

N(1)-(5-phospho-beta-D-ribosyl)glycinamide contacts are provided by residues 26–27 and Glu86; that span reads EL. ATP is bound by residues Arg118, Lys159, 199 to 202, and Glu207; that span reads EEHI. One can recognise an ATP-grasp domain in the interval 123 to 319; sequence ETLVKEAKVP…EFGLHLRAVL (197 aa). Residues Glu276 and Glu288 each contribute to the Mg(2+) site. N(1)-(5-phospho-beta-D-ribosyl)glycinamide-binding positions include Asp295, Lys375, and 382 to 383; that span reads RR.

It belongs to the PurK/PurT family. Homodimer.

The catalysed reaction is N(1)-(5-phospho-beta-D-ribosyl)glycinamide + formate + ATP = N(2)-formyl-N(1)-(5-phospho-beta-D-ribosyl)glycinamide + ADP + phosphate + H(+). The protein operates within purine metabolism; IMP biosynthesis via de novo pathway; N(2)-formyl-N(1)-(5-phospho-D-ribosyl)glycinamide from N(1)-(5-phospho-D-ribosyl)glycinamide (formate route): step 1/1. In terms of biological role, involved in the de novo purine biosynthesis. Catalyzes the transfer of formate to 5-phospho-ribosyl-glycinamide (GAR), producing 5-phospho-ribosyl-N-formylglycinamide (FGAR). Formate is provided by PurU via hydrolysis of 10-formyl-tetrahydrofolate. The sequence is that of Formate-dependent phosphoribosylglycinamide formyltransferase from Pyrococcus furiosus (strain ATCC 43587 / DSM 3638 / JCM 8422 / Vc1).